Consider the following 798-residue polypeptide: Galactinol--sucrose galactosyltransferase (798 aa).

It belongs to the glycosyl hydrolases 36 family.

It carries out the reaction alpha-D-galactosyl-(1-&gt;3)-1D-myo-inositol + sucrose = raffinose + myo-inositol. Its activity is regulated as follows. Inhibited by 1-deoxygalactonojirimycin. Not inhibited by stachyose. Strong inhibition of the hydrolytic activity by sucrose. In terms of biological role, transglycosidase operating by a ping-pong reaction mechanism. Involved in the synthesis of raffinose, a major soluble carbohydrate in seeds, roots and tubers. Able to utilize D-ononitol and D-pinitol as acceptors. May also act as a glycoside hydrolase. In Pisum sativum (Garden pea), this protein is Galactinol--sucrose galactosyltransferase (RFS).